We begin with the raw amino-acid sequence, 66 residues long: Large ribosomal subunit protein uL29 (66 aa).

This sequence belongs to the universal ribosomal protein uL29 family.

In Petrotoga mobilis (strain DSM 10674 / SJ95), this protein is Large ribosomal subunit protein uL29.